The following is a 274-amino-acid chain: Peroxiredoxin-4 (274 aa).

The N-terminal stretch at Met-1 to Gly-40 is a signal peptide. One can recognise a Thioredoxin domain in the interval Ala-82–Tyr-240. Catalysis depends on Cys-127, which acts as the Cysteine sulfenic acid (-SOH) intermediate.

Belongs to the peroxiredoxin family. AhpC/Prx1 subfamily. Homodimer; disulfide-linked, upon oxidation. 5 homodimers assemble to form a ring-like decamer. Post-translationally, the enzyme can be inactivated by further oxidation of the cysteine sulfenic acid (C(P)-SOH) to sulphinic acid (C(P)-SO2H) and sulphonic acid (C(P)-SO3H) instead of its condensation to a disulfide bond.

It is found in the cytoplasm. It localises to the endoplasmic reticulum. It carries out the reaction a hydroperoxide + [thioredoxin]-dithiol = an alcohol + [thioredoxin]-disulfide + H2O. Thiol-specific peroxidase that catalyzes the reduction of hydrogen peroxide and organic hydroperoxides to water and alcohols, respectively. Plays a role in cell protection against oxidative stress by detoxifying peroxides and as sensor of hydrogen peroxide-mediated signaling events. Regulates the activation of NF-kappa-B in the cytosol by a modulation of I-kappa-B-alpha phosphorylation. The chain is Peroxiredoxin-4 (PRDX4) from Bos taurus (Bovine).